A 349-amino-acid chain; its full sequence is DNA-directed RNA polymerase subunit Rpo1N (349 aa).

The tract at residues 306-349 is disordered; sequence EDEGEEFAGEQATNLSESADDRMDRDRPSSHGAAPIDVPEVGDD. Residues 324–334 show a composition bias toward basic and acidic residues; that stretch reads ADDRMDRDRPS.

The protein belongs to the RNA polymerase beta' chain family. As to quaternary structure, part of the RNA polymerase complex.

It is found in the cytoplasm. It catalyses the reaction RNA(n) + a ribonucleoside 5'-triphosphate = RNA(n+1) + diphosphate. Functionally, DNA-dependent RNA polymerase (RNAP) catalyzes the transcription of DNA into RNA using the four ribonucleoside triphosphates as substrates. Forms the clamp head domain. This Halococcus morrhuae (Micrococcus morrhuae) protein is DNA-directed RNA polymerase subunit Rpo1N.